The following is a 175-amino-acid chain: Small ribosomal subunit protein uS9 (175 aa).

It belongs to the universal ribosomal protein uS9 family.

This is Small ribosomal subunit protein uS9 from Streptomyces griseus subsp. griseus (strain JCM 4626 / CBS 651.72 / NBRC 13350 / KCC S-0626 / ISP 5235).